The sequence spans 209 residues: Uracil phosphoribosyltransferase (209 aa).

5-phospho-alpha-D-ribose 1-diphosphate-binding positions include Arg79, Arg104, and 131–139 (DPMLATGGS). Uracil-binding positions include Ile194 and 199 to 201 (GDA). Residue Asp200 participates in 5-phospho-alpha-D-ribose 1-diphosphate binding.

Belongs to the UPRTase family. Mg(2+) serves as cofactor.

The enzyme catalyses UMP + diphosphate = 5-phospho-alpha-D-ribose 1-diphosphate + uracil. Its pathway is pyrimidine metabolism; UMP biosynthesis via salvage pathway; UMP from uracil: step 1/1. Its activity is regulated as follows. Allosterically activated by GTP. In terms of biological role, catalyzes the conversion of uracil and 5-phospho-alpha-D-ribose 1-diphosphate (PRPP) to UMP and diphosphate. This chain is Uracil phosphoribosyltransferase, found in Symbiobacterium thermophilum (strain DSM 24528 / JCM 14929 / IAM 14863 / T).